Here is a 132-residue protein sequence, read N- to C-terminus: Ribonuclease P protein component 2 (132 aa).

Belongs to the eukaryotic/archaeal RNase P protein component 2 family. As to quaternary structure, consists of a catalytic RNA component and at least 4-5 protein subunits.

The protein localises to the cytoplasm. It catalyses the reaction Endonucleolytic cleavage of RNA, removing 5'-extranucleotides from tRNA precursor.. Functionally, part of ribonuclease P, a protein complex that generates mature tRNA molecules by cleaving their 5'-ends. In Methanosarcina acetivorans (strain ATCC 35395 / DSM 2834 / JCM 12185 / C2A), this protein is Ribonuclease P protein component 2.